Consider the following 74-residue polypeptide: UPF0352 protein MS1910 (74 aa).

Belongs to the UPF0352 family.

In Mannheimia succiniciproducens (strain KCTC 0769BP / MBEL55E), this protein is UPF0352 protein MS1910.